Reading from the N-terminus, the 314-residue chain is GTPase Era (314 aa).

The 169-residue stretch at 21-189 (KSGFVGIIGR…QKTLINLLEP (169 aa)) folds into the Era-type G domain. The segment at 29-36 (GRPNVGKS) is G1. 29 to 36 (GRPNVGKS) serves as a coordination point for GTP. The tract at residues 55–59 (QTTRN) is G2. A G3 region spans residues 76–79 (DTPG). Residues 76–80 (DTPGI) and 138–141 (NKSD) contribute to the GTP site. The tract at residues 138-141 (NKSD) is G4. Positions 168–170 (FSA) are G5. The KH type-2 domain maps to 212–296 (IREQILQQTR…YLQLFVKVEP (85 aa)).

The protein belongs to the TRAFAC class TrmE-Era-EngA-EngB-Septin-like GTPase superfamily. Era GTPase family. Monomer.

Its subcellular location is the cytoplasm. The protein localises to the cell inner membrane. An essential GTPase that binds both GDP and GTP, with rapid nucleotide exchange. Plays a role in 16S rRNA processing and 30S ribosomal subunit biogenesis and possibly also in cell cycle regulation and energy metabolism. This is GTPase Era from Rippkaea orientalis (strain PCC 8801 / RF-1) (Cyanothece sp. (strain PCC 8801)).